The following is a 295-amino-acid chain: Non-selective voltage-gated ion channel VDAC2 (295 aa).

ATP contacts are provided by K24 and K32. Residue K32 is modified to N6-acetyllysine; alternate. Position 32 is an N6-succinyllysine; alternate (K32). A Glycyl lysine isopeptide (Lys-Gly) (interchain with G-Cter in ubiquitin); alternate cross-link involves residue K32. The next 2 membrane-spanning stretches (beta stranded) occupy residues 38–47 (LVKLDVKTKS) and 51–59 (VEFSTSGSS). K65 participates in a covalent cross-link: Glycyl lysine isopeptide (Lys-Gly) (interchain with G-Cter in ubiquitin). The chain crosses the membrane as a beta stranded span at residues 66 to 76 (VSGTLETKYKW). Y79 is subject to Phosphotyrosine. Transmembrane regions (beta stranded) follow at residues 81–88 (LTFTEKWN), 92–101 (TLGTEIAIED), and 107–116 (LKLTFDTTFS). The residue at position 119 (T119) is a Phosphothreonine. K121 is modified (N6-acetyllysine; alternate). Residue K121 forms a Glycyl lysine isopeptide (Lys-Gly) (interchain with G-Cter in ubiquitin); alternate linkage. K122 participates in a covalent cross-link: Glycyl lysine isopeptide (Lys-Gly) (interchain with G-Cter in ubiquitin). Transmembrane regions (beta stranded) follow at residues 123-132 (SGKIKSAYKR), 135-142 (INLGCDVD), 149-157 (AIHGSAVFG), and 162-170 (LAGYQMTFD). K173 participates in a covalent cross-link: Glycyl lysine isopeptide (Lys-Gly) (interchain with G-Cter in ubiquitin). The next 6 membrane-spanning stretches (beta stranded) occupy residues 175 to 187 (KLTR…GYRT), 190 to 197 (FQLHTNVN), 201 to 210 (EFGGSIYQKV), 214 to 223 (FDTSVNLAWT), 230 to 239 (RFGIAAKYQL), and 243 to 250 (ASISAKVN). The residue at position 237 (Y237) is a Phosphotyrosine. S252 is subject to Phosphoserine. NAD(+) is bound by residues 254–256 (LIG) and 272–276 (SALVD). Transmembrane regions (beta stranded) follow at residues 254–263 (LIGVGYTQTL) and 266–275 (GVKLTLSALV). Residue K278 is modified to N6-acetyllysine; alternate. A Glycyl lysine isopeptide (Lys-Gly) (interchain with G-Cter in ubiquitin); alternate cross-link involves residue K278. A beta stranded membrane pass occupies residues 285-294 (HKLGLALELE).

This sequence belongs to the eukaryotic mitochondrial porin family. In terms of assembly, monomer, homodimer and higher order oligomers; formation of higher order structures is necessary for scramblase activity. Interacts with ARMC12 in a TBC1D21-dependent manner. Interacts with KLC3. Interacts with SPATA33. Interacts with PPP3CC in a SPATA33-dependent manner. Ubiquitinated by PRKN during mitophagy, leading to its degradation and enhancement of mitophagy. Deubiquitinated by USP30. Highly expressed in heart, kidney, brain and ascitic tumor with very low levels in liver. Expressed in the head region of epididymal sperm.

The protein localises to the mitochondrion outer membrane. The protein resides in the membrane. It catalyses the reaction chloride(in) = chloride(out). The catalysed reaction is K(+)(in) = K(+)(out). It carries out the reaction a 1,2-diacyl-sn-glycero-3-phospho-L-serine(in) = a 1,2-diacyl-sn-glycero-3-phospho-L-serine(out). The enzyme catalyses a 1,2-diacyl-sn-glycero-3-phosphocholine(in) = a 1,2-diacyl-sn-glycero-3-phosphocholine(out). It catalyses the reaction a 1,2-diacyl-sn-glycero-3-phospho-(1D-myo-inositol)(in) = a 1,2-diacyl-sn-glycero-3-phospho-(1D-myo-inositol)(out). Non-selective voltage-gated ion channel that mediates the transport of anions and cations through the mitochondrion outer membrane and plasma membrane. The channel adopts an open conformation at zero mV and a closed conformation at both positive and negative potentials. There are two populations of channels; the main that functions in a lower open-state conductance with lower ion selectivity, that switch, in a voltage-dependent manner, from the open to a low-conducting 'closed' state and the other that has a normal ion selectivity in the typical high conductance, 'open' state. Binds various lipids, including the sphingolipid ceramide, the phospholipid phosphatidylcholine, and the sterols cholesterol and oxysterol. Binding of ceramide promotes the mitochondrial outer membrane permeabilization (MOMP) apoptotic pathway. Functionally, catalyzes the scrambling of phospholipids across the outer mitochondrial membrane; the mechanism is unrelated to channel activity and is capable of translocating both anionic and zwitterionic phospholipids. The sequence is that of Non-selective voltage-gated ion channel VDAC2 from Rattus norvegicus (Rat).